Here is a 249-residue protein sequence, read N- to C-terminus: ATP synthase subunits region ORF 6 (249 aa).

The sequence is that of ATP synthase subunits region ORF 6 from Fuscovulum blasticum (Rhodobacter blasticus).